The primary structure comprises 203 residues: Ribosome-binding factor A (203 aa).

Residues 119–141 (LAEVRRDARPAGDEDPYRRPRTV) show a composition bias toward basic and acidic residues. Positions 119-203 (LAEVRRDARP…SPGGDPTAGR (85 aa)) are disordered. Residues 142–169 (DEDDEDEDEDLVDEFDEFDRVEELDADA) show a composition bias toward acidic residues.

It belongs to the RbfA family. Monomer. Binds 30S ribosomal subunits, but not 50S ribosomal subunits or 70S ribosomes.

The protein resides in the cytoplasm. Functionally, one of several proteins that assist in the late maturation steps of the functional core of the 30S ribosomal subunit. Associates with free 30S ribosomal subunits (but not with 30S subunits that are part of 70S ribosomes or polysomes). Required for efficient processing of 16S rRNA. May interact with the 5'-terminal helix region of 16S rRNA. The polypeptide is Ribosome-binding factor A (Frankia alni (strain DSM 45986 / CECT 9034 / ACN14a)).